The chain runs to 312 residues: Ribosomal protein L11 methyltransferase (312 aa).

4 residues coordinate S-adenosyl-L-methionine: threonine 162, glycine 183, aspartate 205, and asparagine 248.

This sequence belongs to the methyltransferase superfamily. PrmA family.

The protein localises to the cytoplasm. It carries out the reaction L-lysyl-[protein] + 3 S-adenosyl-L-methionine = N(6),N(6),N(6)-trimethyl-L-lysyl-[protein] + 3 S-adenosyl-L-homocysteine + 3 H(+). Methylates ribosomal protein L11. This is Ribosomal protein L11 methyltransferase from Bacillus cereus (strain Q1).